Consider the following 161-residue polypeptide: Regulator of ribonuclease activity A (161 aa).

It belongs to the RraA family. Homotrimer. Binds to both RNA-binding sites in the C-terminal region of Rne and to RhlB.

The protein localises to the cytoplasm. Functionally, globally modulates RNA abundance by binding to RNase E (Rne) and regulating its endonucleolytic activity. Can modulate Rne action in a substrate-dependent manner by altering the composition of the degradosome. Modulates RNA-binding and helicase activities of the degradosome. This Shigella dysenteriae serotype 1 (strain Sd197) protein is Regulator of ribonuclease activity A.